A 453-amino-acid polypeptide reads, in one-letter code: MAKAKRMYGCTECGATFPKWAGQCADCGAWNTLVETVVEAAPSGSGRGGWAGQQANLKTLAEVSVEEMPRFTTGSTELDRVLGGGLVDGSVVLIGGDPGIGKSTILLQTLCNLASRVPALYVTGEESQQQVAMRARRLSLPEDKLKVMTETSIETIIATARQEQPRVMVIDSIQTIFTEQLQSAPGGVAQVRESAAMLVRYAKQSGTAIFLVGHVTKEGALAGPRVLEHMVDTVLYFEGESDGRLRLLRAVKNRFGAVNELGVFGMTDKGLKEVSNPSAIFLTRAQEAVPGSVVMATWEGSRPMLVEVQALVDTSHLANPRRVTLGLDQNRLAMLLAVLHRHGGIPTYDQDVFLNVVGGVKVLETASDLALMAAVMSSLRNRPLPHDLLVFGEVGLSGEVRPVPSGQERLKEAGKHGFKRAIVPLGNAPKEAPAGLQVIAVTRLEQALDALFE.

The segment at 10 to 27 (CTECGATFPKWAGQCADC) adopts a C4-type zinc-finger fold. ATP is bound at residue 96–103 (GDPGIGKS). A RadA KNRFG motif motif is present at residues 252 to 256 (KNRFG). Positions 351–453 (DVFLNVVGGV…LEQALDALFE (103 aa)) are lon-protease-like.

It belongs to the RecA family. RadA subfamily.

DNA-dependent ATPase involved in processing of recombination intermediates, plays a role in repairing DNA breaks. Stimulates the branch migration of RecA-mediated strand transfer reactions, allowing the 3' invading strand to extend heteroduplex DNA faster. Binds ssDNA in the presence of ADP but not other nucleotides, has ATPase activity that is stimulated by ssDNA and various branched DNA structures, but inhibited by SSB. Does not have RecA's homology-searching function. This is DNA repair protein RadA from Pseudomonas aeruginosa (strain ATCC 15692 / DSM 22644 / CIP 104116 / JCM 14847 / LMG 12228 / 1C / PRS 101 / PAO1).